The primary structure comprises 194 residues: CMRF35-like molecule 5 (194 aa).

The N-terminal stretch at 1–18 (MWLSPSLLLLILPGYSIA) is a signal peptide. One can recognise an Ig-like V-type domain in the interval 19–125 (AKITGPTTVN…LGVKVQVTIN (107 aa)). Residues 19 to 165 (AKITGPTTVN…LTRSPLKSTH (147 aa)) are Extracellular-facing. N-linked (GlcNAc...) asparagine glycosylation occurs at asparagine 28. Cysteine 39 and cysteine 107 are oxidised to a cystine. Residues 166–186 (FLFLFLLELPLLLSMLGTVLW) traverse the membrane as a helical segment. Residues 187 to 194 (VNRPQRRS) are Cytoplasmic-facing.

It belongs to the CD300 family. Forms complexes with the CD300 family members with exception of CD300c. Post-translationally, N-glycosylated. In terms of tissue distribution, expression seems restricted to cells of myeloid lineage.

Its subcellular location is the cell membrane. This chain is CMRF35-like molecule 5 (CD300LD), found in Homo sapiens (Human).